Here is a 25-residue protein sequence, read N- to C-terminus: Neuromedin-U-25 (25 aa).

At glutamine 18 the chain carries Pyrrolidone carboxylic acid. Asparagine 25 is subject to Asparagine amide.

The protein belongs to the NmU family.

It localises to the secreted. In terms of biological role, stimulates uterine smooth muscle contraction and causes selective vasoconstriction. The sequence is that of Neuromedin-U-25 (NMU) from Canis lupus familiaris (Dog).